Consider the following 49-residue polypeptide: Disintegrin eristostatin (49 aa).

A Disintegrin domain is found at 1-49 (QEEPCATGPCCRRCKFKRAGKVCRVARGDWNDDYCTGKSCDCPKNPWNG). 4 disulfide bridges follow: cysteine 5–cysteine 14, cysteine 10–cysteine 35, cysteine 11–cysteine 40, and cysteine 23–cysteine 42. The short motif at 27-29 (RGD) is the Cell attachment site element.

It belongs to the venom metalloproteinase (M12B) family. P-II subfamily. P-IIa sub-subfamily. Monomer. As to expression, expressed by the venom gland.

The protein resides in the secreted. Its function is as follows. Is a potent inhibitor of ADP-induced platelet aggregation. Acts by binding to alpha-IIb/beta-3 (ITGA2B/ITGB3) receptor on the platelet surface. Binds with the same high affinity to resting and activated platelets. Also binds the alpha-4/beta-1 (ITGA4/ITGB1) integrin. Is a potent inhibitor of human and murine melanoma metastases in mouse model systems, also due to the inhibition of binding between the alpha-4/beta-1 integrin and the vascular cell adhesion protein VCAM1. Reacts neither with the integrin alpha-V/beta-3 (ITGAV/ITGB3) vitronectin receptor nor with the integrin alpha-5/beta-1 (ITGA5/ITGB1) fibronectin receptor. Has no effect on cell proliferation or angiogenesis. Specifically inhibits cell migration on fibronectin, but not that on collagen IV or laminin. May involve fibronectin-binding integrins that mediate cell migration. The sequence is that of Disintegrin eristostatin from Eristicophis macmahoni (Leaf-nosed viper).